The following is a 233-amino-acid chain: 7-cyano-7-deazaguanine synthase (233 aa).

18-28 (FSGGQDSTTCL) serves as a coordination point for ATP. C198, C213, C216, and C219 together coordinate Zn(2+).

The protein belongs to the QueC family. Zn(2+) serves as cofactor.

The enzyme catalyses 7-carboxy-7-deazaguanine + NH4(+) + ATP = 7-cyano-7-deazaguanine + ADP + phosphate + H2O + H(+). It functions in the pathway purine metabolism; 7-cyano-7-deazaguanine biosynthesis. Its function is as follows. Catalyzes the ATP-dependent conversion of 7-carboxy-7-deazaguanine (CDG) to 7-cyano-7-deazaguanine (preQ(0)). This is 7-cyano-7-deazaguanine synthase from Wolinella succinogenes (strain ATCC 29543 / DSM 1740 / CCUG 13145 / JCM 31913 / LMG 7466 / NCTC 11488 / FDC 602W) (Vibrio succinogenes).